The chain runs to 595 residues: Quinoprotein alcohol dehydrogenase PedH (595 aa).

An N-terminal signal peptide occupies residues Met-1–Ala-27. Gln-87 provides a ligand contact to pyrroloquinoline quinone. Residues Cys-131 and Cys-132 are joined by a disulfide bond. Pyrroloquinoline quinone is bound by residues Arg-137, Ser-181, Gly-197, and Gly-198. Residue Glu-199 coordinates Pr(3+). Residue Trp-263 coordinates pyrroloquinoline quinone. Positions 281, 323, and 325 each coordinate Pr(3+). The Proton acceptor role is filled by Asp-323. Positions 350, 417, 493, and 557 each coordinate pyrroloquinoline quinone.

This sequence belongs to the bacterial PQQ dehydrogenase family. Requires Pr(3+) as cofactor. Nd(3+) is required as a cofactor. The cofactor is La(3+). It depends on Ce(3+) as a cofactor. Sm(3+) serves as cofactor. Requires pyrroloquinoline quinone as cofactor. The disulfide ring formed between the two adjacent cysteine residues Cys-131 and Cys-132 is essential for efficient electron transfer at pH 7 from PedH to its natural electron acceptor cytochrome c550.

It localises to the periplasm. It catalyses the reaction a primary alcohol + 2 Fe(III)-[cytochrome c] = an aldehyde + 2 Fe(II)-[cytochrome c] + 2 H(+). The enzyme catalyses ethanol + 2 Fe(III)-[cytochrome c] = acetaldehyde + 2 Fe(II)-[cytochrome c] + 2 H(+). The catalysed reaction is butan-1-ol + 2 Fe(III)-[cytochrome c] = butanal + 2 Fe(II)-[cytochrome c] + 2 H(+). It carries out the reaction butan-2-ol + 2 Fe(III)-[cytochrome c] = butan-2-one + 2 Fe(II)-[cytochrome c] + 2 H(+). It catalyses the reaction 2-phenylethanol + 2 Fe(III)-[cytochrome c] = 2-phenylacetaldehyde + 2 Fe(II)-[cytochrome c] + 2 H(+). The enzyme catalyses octan-1-ol + 2 Fe(III)-[cytochrome c] = octanal + 2 Fe(II)-[cytochrome c] + 2 H(+). The catalysed reaction is hexan-1-ol + 2 Fe(III)-[cytochrome c] = hexanal + 2 Fe(II)-[cytochrome c] + 2 H(+). It carries out the reaction cinnamyl alcohol + 2 Fe(III)-[cytochrome c] = cinnamaldehyde + 2 Fe(II)-[cytochrome c] + 2 H(+). It catalyses the reaction farnesol + 2 Fe(III)-[cytochrome c] = farnesal + 2 Fe(II)-[cytochrome c] + 2 H(+). The enzyme catalyses an aldehyde + 2 Fe(III)-[cytochrome c] + H2O = a carboxylate + 2 Fe(II)-[cytochrome c] + 3 H(+). The catalysed reaction is acetaldehyde + 2 Fe(III)-[cytochrome c] + H2O = 2 Fe(II)-[cytochrome c] + acetate + 3 H(+). It carries out the reaction butanal + 2 Fe(III)-[cytochrome c] + H2O = butanoate + 2 Fe(II)-[cytochrome c] + 3 H(+). It catalyses the reaction hexanal + 2 Fe(III)-[cytochrome c] + H2O = hexanoate + 2 Fe(II)-[cytochrome c] + 3 H(+). The enzyme catalyses octanal + 2 Fe(III)-[cytochrome c] + H2O = octanoate + 2 Fe(II)-[cytochrome c] + 3 H(+). Alcohol dehydrogenase that catalyzes the oxidation of a range of substrates, including linear and aromatic primary and secondary alcohols, as well as aldehydes, but only in the presence of lanthanides, allowing bacterial growth with a variety of volatile organic compounds (VOCs) as carbon and energy sources. Is also involved in the transcriptional regulation of pedE and pedH, most likely acting as a lanthanide sensory module. Uses a specific inducible cytochrome c550, encoded by the adjacent gene in the locus, as electron acceptor. The sequence is that of Quinoprotein alcohol dehydrogenase PedH from Pseudomonas putida (strain ATCC 47054 / DSM 6125 / CFBP 8728 / NCIMB 11950 / KT2440).